Reading from the N-terminus, the 641-residue chain is DEAD-box ATP-dependent RNA helicase 50 (641 aa).

Disordered stretches follow at residues 86-115 (SMPS…IGNF), 129-189 (RSAH…LNSV), and 197-216 (DDLD…WGNI). Residues 150–159 (PSDESDEDGT) show a composition bias toward acidic residues. The short motif at 240–268 (RSFKEIGCSDEILGALRSFGFPRPSHIQA) is the Q motif element. Positions 271–452 (YRPVLEGKSC…VETFPDCELI (182 aa)) constitute a Helicase ATP-binding domain. Residue 284–291 (DQSGSGKT) participates in ATP binding. Positions 399-402 (DEVD) match the DEAD box motif. The Helicase C-terminal domain maps to 487–641 (NKKSALVKII…GHPLHDVPCV (155 aa)).

This sequence belongs to the DEAD box helicase family.

The catalysed reaction is ATP + H2O = ADP + phosphate + H(+). Its function is as follows. Probably involved in resistance to biotic and abiotic stresses. Confers tolerance to oxidative stress and mediates pathogenesis-related (PR) genes expression. Exhibits RNA-dependent ATPase and ATP-dependent RNA helicase activities in vitro. This Oryza sativa subsp. japonica (Rice) protein is DEAD-box ATP-dependent RNA helicase 50.